Reading from the N-terminus, the 206-residue chain is ATP phosphoribosyltransferase (206 aa).

The protein belongs to the ATP phosphoribosyltransferase family. Short subfamily. Heteromultimer composed of HisG and HisZ subunits.

The protein localises to the cytoplasm. The catalysed reaction is 1-(5-phospho-beta-D-ribosyl)-ATP + diphosphate = 5-phospho-alpha-D-ribose 1-diphosphate + ATP. It participates in amino-acid biosynthesis; L-histidine biosynthesis; L-histidine from 5-phospho-alpha-D-ribose 1-diphosphate: step 1/9. Functionally, catalyzes the condensation of ATP and 5-phosphoribose 1-diphosphate to form N'-(5'-phosphoribosyl)-ATP (PR-ATP). Has a crucial role in the pathway because the rate of histidine biosynthesis seems to be controlled primarily by regulation of HisG enzymatic activity. This Sulfurovum sp. (strain NBC37-1) protein is ATP phosphoribosyltransferase.